The primary structure comprises 169 residues: Ribosome maturation factor RimP (169 aa).

Belongs to the RimP family.

It is found in the cytoplasm. In terms of biological role, required for maturation of 30S ribosomal subunits. This chain is Ribosome maturation factor RimP, found in Pseudomonas putida (strain ATCC 700007 / DSM 6899 / JCM 31910 / BCRC 17059 / LMG 24140 / F1).